The chain runs to 342 residues: Immune-associated nucleotide-binding protein 9 (342 aa).

The region spanning 22-229 is the AIG1-type G domain; the sequence is NPKRTLVLVG…YSDELFHELQ (208 aa). The interval 31 to 38 is G1; it reads GRTGNGKS. GTP contacts are provided by residues 31 to 39 and Ser-52; that span reads GRTGNGKSA. The G2 stretch occupies residues 58-62; the sequence is GVTST. Residues 80 to 83 form a G3 region; that stretch reads DTPG. The interval 149–152 is G4; that stretch reads TGGD. The G5 stretch occupies residues 188–190; sequence NNK. Asn-189 is a binding site for GTP. Residues 276–342 adopt a coiled-coil conformation; the sequence is ETKLRDTAKR…QKKLGKCINL (67 aa).

The protein belongs to the TRAFAC class TrmE-Era-EngA-EngB-Septin-like GTPase superfamily. AIG1/Toc34/Toc159-like paraseptin GTPase family. IAN subfamily. Mainly expressed in leaves.

The polypeptide is Immune-associated nucleotide-binding protein 9 (Arabidopsis thaliana (Mouse-ear cress)).